The sequence spans 222 residues: Phosphoribosylformylglycinamidine synthase subunit PurQ (222 aa).

Residues 3-222 (SAVIQLPGLN…LFESVLGRAA (220 aa)) enclose the Glutamine amidotransferase type-1 domain. Cysteine 86 functions as the Nucleophile in the catalytic mechanism. Catalysis depends on residues histidine 196 and glutamate 198.

In terms of assembly, part of the FGAM synthase complex composed of 1 PurL, 1 PurQ and 2 PurS subunits.

It is found in the cytoplasm. It catalyses the reaction N(2)-formyl-N(1)-(5-phospho-beta-D-ribosyl)glycinamide + L-glutamine + ATP + H2O = 2-formamido-N(1)-(5-O-phospho-beta-D-ribosyl)acetamidine + L-glutamate + ADP + phosphate + H(+). The enzyme catalyses L-glutamine + H2O = L-glutamate + NH4(+). It functions in the pathway purine metabolism; IMP biosynthesis via de novo pathway; 5-amino-1-(5-phospho-D-ribosyl)imidazole from N(2)-formyl-N(1)-(5-phospho-D-ribosyl)glycinamide: step 1/2. Functionally, part of the phosphoribosylformylglycinamidine synthase complex involved in the purines biosynthetic pathway. Catalyzes the ATP-dependent conversion of formylglycinamide ribonucleotide (FGAR) and glutamine to yield formylglycinamidine ribonucleotide (FGAM) and glutamate. The FGAM synthase complex is composed of three subunits. PurQ produces an ammonia molecule by converting glutamine to glutamate. PurL transfers the ammonia molecule to FGAR to form FGAM in an ATP-dependent manner. PurS interacts with PurQ and PurL and is thought to assist in the transfer of the ammonia molecule from PurQ to PurL. The chain is Phosphoribosylformylglycinamidine synthase subunit PurQ from Chelativorans sp. (strain BNC1).